Consider the following 313-residue polypeptide: Olfactory receptor 8B2 (313 aa).

Residues 1–25 lie on the Extracellular side of the membrane; the sequence is MLARNNSLVTEFILAGLTDHPEFRQ. N-linked (GlcNAc...) asparagine glycosylation occurs at Asn-5. Residues 26–46 traverse the membrane as a helical segment; the sequence is PLFFLFLVIYIVTMVGNLGLI. The Cytoplasmic segment spans residues 47–54; the sequence is TLFGLNSH. Residues 55–75 traverse the membrane as a helical segment; the sequence is LHTPMYYFLFNLSFIDLCYSS. The Extracellular portion of the chain corresponds to 76-99; it reads VFTPKMLMNFVSKKNIISNVGCMT. An intrachain disulfide couples Cys-97 to Cys-189. A helical transmembrane segment spans residues 100–120; that stretch reads RLFFFLFFVISECYMLTSMAY. Topologically, residues 121-139 are cytoplasmic; the sequence is DRYVAICNPLLYKVTMSHQ. Residues 140 to 160 form a helical membrane-spanning segment; sequence VCSMLTFAAYIMGLAGATAHT. Over 161 to 197 the chain is Extracellular; sequence GCMLRLTFCSANIINHYLCDILPLLQLSCTSTYVNEV. A helical transmembrane segment spans residues 198-217; sequence VVLIVVGTNITVPSCTILIS. At 218–237 the chain is on the cytoplasmic side; that stretch reads YVFIVTSILHIKSTQGRSKA. Residues 238–258 traverse the membrane as a helical segment; the sequence is FSTCSSHVIALSLFFGSAAFM. Residues 259–270 lie on the Extracellular side of the membrane; the sequence is YIKYSSGSMEQG. Residues 271–291 traverse the membrane as a helical segment; it reads KVSSVFYTNVVPMLNPLIYSL. The Cytoplasmic portion of the chain corresponds to 292 to 313; sequence RNKDVKVALRKALIKIQRRNIF.

It belongs to the G-protein coupled receptor 1 family.

It localises to the cell membrane. In terms of biological role, odorant receptor. The sequence is that of Olfactory receptor 8B2 (OR8B2) from Homo sapiens (Human).